The following is a 506-amino-acid chain: Histidine ammonia-lyase (506 aa).

Positions 144–146 form a cross-link, 5-imidazolinone (Ala-Gly); it reads ASG. 2,3-didehydroalanine (Ser) is present on serine 145.

This sequence belongs to the PAL/histidase family. Post-translationally, contains an active site 4-methylidene-imidazol-5-one (MIO), which is formed autocatalytically by cyclization and dehydration of residues Ala-Ser-Gly.

It is found in the cytoplasm. The enzyme catalyses L-histidine = trans-urocanate + NH4(+). The protein operates within amino-acid degradation; L-histidine degradation into L-glutamate; N-formimidoyl-L-glutamate from L-histidine: step 1/3. The protein is Histidine ammonia-lyase of Legionella pneumophila subsp. pneumophila (strain Philadelphia 1 / ATCC 33152 / DSM 7513).